The following is a 263-amino-acid chain: 4-hydroxy-2-oxo-heptane-1,7-dioate aldolase (263 aa).

The active-site Proton acceptor is the histidine 45. Glutamine 147 provides a ligand contact to substrate. Glutamate 149 is an a divalent metal cation binding site. Positions 174 and 175 each coordinate substrate. A divalent metal cation is bound at residue aspartate 175.

It belongs to the HpcH/HpaI aldolase family. In terms of assembly, homohexamer; trimer of dimers. The cofactor is a divalent metal cation.

It catalyses the reaction 4-hydroxy-2-oxoheptanedioate = succinate semialdehyde + pyruvate. It functions in the pathway aromatic compound metabolism; 4-hydroxyphenylacetate degradation; pyruvate and succinate semialdehyde from 4-hydroxyphenylacetate: step 7/7. Functionally, catalyzes the reversible retro-aldol cleavage of 4-hydroxy-2-ketoheptane-1,7-dioate (HKHD) to pyruvate and succinic semialdehyde. The protein is 4-hydroxy-2-oxo-heptane-1,7-dioate aldolase of Salmonella dublin (strain CT_02021853).